A 150-amino-acid polypeptide reads, in one-letter code: Ribonuclease pancreatic delta-type (150 aa).

A signal peptide spans 1–25 (MGLEKSFILFSLLVLVLGWVQPSLG). R35 serves as a coordination point for substrate. H37 functions as the Proton acceptor in the catalytic mechanism. Disulfide bonds link C51–C110, C65–C121, C83–C136, and C90–C98. Substrate-binding positions include 66 to 70 (KRVNT), K91, and R111. The active-site Proton donor is the H145.

Belongs to the pancreatic ribonuclease family. As to quaternary structure, monomer.

Its subcellular location is the secreted. It carries out the reaction an [RNA] containing cytidine + H2O = an [RNA]-3'-cytidine-3'-phosphate + a 5'-hydroxy-ribonucleotide-3'-[RNA].. It catalyses the reaction an [RNA] containing uridine + H2O = an [RNA]-3'-uridine-3'-phosphate + a 5'-hydroxy-ribonucleotide-3'-[RNA].. Endonuclease that catalyzes the cleavage of RNA on the 3' side of pyrimidine nucleotides. Acts on single-stranded and double-stranded RNA. The polypeptide is Ribonuclease pancreatic delta-type (Rnase1d) (Rattus norvegicus (Rat)).